A 290-amino-acid polypeptide reads, in one-letter code: Ribosomal RNA small subunit methyltransferase A (290 aa).

S-adenosyl-L-methionine is bound by residues Asn27, Leu29, Gly54, Glu75, Asp100, and Asn125.

The protein belongs to the class I-like SAM-binding methyltransferase superfamily. rRNA adenine N(6)-methyltransferase family. RsmA subfamily.

Its subcellular location is the cytoplasm. It catalyses the reaction adenosine(1518)/adenosine(1519) in 16S rRNA + 4 S-adenosyl-L-methionine = N(6)-dimethyladenosine(1518)/N(6)-dimethyladenosine(1519) in 16S rRNA + 4 S-adenosyl-L-homocysteine + 4 H(+). In terms of biological role, specifically dimethylates two adjacent adenosines (A1518 and A1519) in the loop of a conserved hairpin near the 3'-end of 16S rRNA in the 30S particle. May play a critical role in biogenesis of 30S subunits. The sequence is that of Ribosomal RNA small subunit methyltransferase A from Streptococcus thermophilus (strain ATCC BAA-250 / LMG 18311).